Consider the following 223-residue polypeptide: Urease accessory protein UreF (223 aa).

Belongs to the UreF family. UreD, UreF and UreG form a complex that acts as a GTP-hydrolysis-dependent molecular chaperone, activating the urease apoprotein by helping to assemble the nickel containing metallocenter of UreC. The UreE protein probably delivers the nickel.

It is found in the cytoplasm. Functionally, required for maturation of urease via the functional incorporation of the urease nickel metallocenter. The sequence is that of Urease accessory protein UreF from Rhizobium etli (strain ATCC 51251 / DSM 11541 / JCM 21823 / NBRC 15573 / CFN 42).